A 653-amino-acid chain; its full sequence is Calpain-10 (653 aa).

The region spanning 13–321 (LFRDAAFPAA…FDEITIGYPI (309 aa)) is the Calpain catalytic domain. Residues Cys73, His238, and Asn263 contribute to the active site. Domain III stretches follow at residues 322–494 (TEAG…VSLS) and 513–653 (EWGT…PSWQ).

This sequence belongs to the peptidase C2 family.

Calcium-regulated non-lysosomal thiol-protease which catalyzes limited proteolysis of substrates involved in cytoskeletal remodeling and signal transduction. May play a role in insulin-stimulated glucose uptake. This is Calpain-10 (CAPN10) from Macaca fascicularis (Crab-eating macaque).